The sequence spans 293 residues: N-acetylneuraminate lyase (293 aa).

Ser-48 and Ser-49 together coordinate aceneuramate. Tyr-137 (proton donor) is an active-site residue. The active-site Schiff-base intermediate with substrate is Lys-165. Residues Thr-167, Gly-189, Asp-191, Glu-192, and Ser-208 each coordinate aceneuramate.

The protein belongs to the DapA family. NanA subfamily. As to quaternary structure, homotetramer.

It localises to the cytoplasm. The catalysed reaction is aceneuramate = aldehydo-N-acetyl-D-mannosamine + pyruvate. It participates in amino-sugar metabolism; N-acetylneuraminate degradation; D-fructose 6-phosphate from N-acetylneuraminate: step 1/5. Its function is as follows. Catalyzes the reversible aldol cleavage of N-acetylneuraminic acid (sialic acid; Neu5Ac) to form pyruvate and N-acetylmannosamine (ManNAc) via a Schiff base intermediate. This Staphylococcus aureus (strain MRSA252) protein is N-acetylneuraminate lyase.